The sequence spans 993 residues: Replication protein 1a (993 aa).

The segment at 50–409 is methyltransferase; sequence RNVLSVKDSE…TIVINGMSMQ (360 aa). Residues 72–290 enclose the Alphavirus-like MT domain; the sequence is HLTQQEFAPH…HDWENIKSFL (219 aa). Residues 537–565 form a disordered region; the sequence is LAQPVDEVSDSPEVPSSTPDDTADVCGKE. One can recognise a (+)RNA virus helicase ATP-binding domain in the interval 687–838; sequence CVICNSESLS…KIIPDETSDA (152 aa). The interval 712 to 975 is ATP-dependent helicase; sequence VDGVAGCGKT…LTRHKVTFRY (264 aa). Position 714 to 721 (714 to 721) interacts with ATP; that stretch reads GVAGCGKT. Positions 839-993 constitute a (+)RNA virus helicase C-terminal domain; that stretch reads DTTFRSPQDV…DLIAECIARA (155 aa).

This sequence belongs to the bromoviridae replication protein 1a family. In terms of assembly, interacts with RNA-directed RNA polymerase 2a.

It is found in the host endoplasmic reticulum membrane. Functionally, involved in the virus replication. Contains a helicase domain and a methyltransferase domain. The methyltransferase domain is probably involved in viral RNA capping. Involved in the formation of ER membrane spherular invaginations in which RNA replication complexes form. This Cucumber mosaic virus (strain O) (CMV) protein is Replication protein 1a.